The following is a 386-amino-acid chain: Coproporphyrinogen-III oxidase 1, chloroplastic (386 aa).

The transit peptide at 1-48 (MASHSSTLLSSPTFAPFSSHRLHYSPNPSTLRFSRPIRNKPNLALRCS) directs the protein to the chloroplast. The interval 125-134 (VLQDGNVFEK) is important for dimerization. Ser174 lines the substrate pocket. His188 serves as the catalytic Proton donor. Residues 190-192 (NYR) and 344-349 (GGRIES) contribute to the substrate site. Residues 326 to 361 (YVEFNLVYDRGTTFGLKTGGRIESILVSLPLSARWE) form an important for dimerization region.

This sequence belongs to the aerobic coproporphyrinogen-III oxidase family. In terms of assembly, homodimer. Expressed in cotyledons, leaves and roots.

Its subcellular location is the plastid. It localises to the chloroplast. The enzyme catalyses coproporphyrinogen III + O2 + 2 H(+) = protoporphyrinogen IX + 2 CO2 + 2 H2O. Its pathway is porphyrin-containing compound metabolism; protoporphyrin-IX biosynthesis; protoporphyrinogen-IX from coproporphyrinogen-III (O2 route): step 1/1. The protein operates within porphyrin-containing compound metabolism; chlorophyll biosynthesis. Key enzyme in heme biosynthesis. Catalyzes the oxidative decarboxylation of propionic acid side chains of rings A and B of coproporphyrinogen III. The sequence is that of Coproporphyrinogen-III oxidase 1, chloroplastic (CPX1) from Arabidopsis thaliana (Mouse-ear cress).